The following is a 201-amino-acid chain: Recombination protein RecR (201 aa).

The C4-type zinc-finger motif lies at 60–75; the sequence is CKSCGNIDTRNPCTVC. One can recognise a Toprim domain in the interval 83 to 178; sequence SIIVVVADVA…KVTRLAHGVP (96 aa).

Belongs to the RecR family.

May play a role in DNA repair. It seems to be involved in an RecBC-independent recombinational process of DNA repair. It may act with RecF and RecO. The polypeptide is Recombination protein RecR (Rhodopseudomonas palustris (strain BisB5)).